Here is a 144-residue protein sequence, read N- to C-terminus: Universal stress protein F (144 aa).

Belongs to the universal stress protein A family. Homodimer.

This Salmonella typhi protein is Universal stress protein F (uspF).